The chain runs to 783 residues: Probable phosphoketolase (783 aa).

The protein belongs to the XFP family. Thiamine diphosphate is required as a cofactor.

The chain is Probable phosphoketolase from Rhodopseudomonas palustris (strain TIE-1).